An 80-amino-acid polypeptide reads, in one-letter code: MKEQKWIHEGLITESLPNGMFRVRLDNVDNEDLILGYVSGRIRRSFIRILPGXRVKIEVSRXDSTRGRIIYRLRNKDSNB.

The 74-residue stretch at 1 to 74 (MKEQKWIHEG…TRGRIIYRLR (74 aa)) folds into the S1-like domain.

This sequence belongs to the IF-1 family. As to quaternary structure, component of the 30S ribosomal translation pre-initiation complex which assembles on the 30S ribosome in the order IF-2 and IF-3, IF-1 and N-formylmethionyl-tRNA(fMet); mRNA recruitment can occur at any time during PIC assembly.

The protein resides in the plastid. It is found in the chloroplast. Functionally, one of the essential components for the initiation of protein synthesis. Stabilizes the binding of IF-2 and IF-3 on the 30S subunit to which N-formylmethionyl-tRNA(fMet) subsequently binds. Helps modulate mRNA selection, yielding the 30S pre-initiation complex (PIC). Upon addition of the 50S ribosomal subunit IF-1, IF-2 and IF-3 are released leaving the mature 70S translation initiation complex. The sequence is that of Translation initiation factor IF-1, chloroplastic from Illicium parviflorum (Yellow anise tree).